A 230-amino-acid chain; its full sequence is Large ribosomal subunit protein uL1 (230 aa).

This sequence belongs to the universal ribosomal protein uL1 family. As to quaternary structure, part of the 50S ribosomal subunit.

Binds directly to 23S rRNA. The L1 stalk is quite mobile in the ribosome, and is involved in E site tRNA release. Functionally, protein L1 is also a translational repressor protein, it controls the translation of the L11 operon by binding to its mRNA. This is Large ribosomal subunit protein uL1 from Nitrobacter winogradskyi (strain ATCC 25391 / DSM 10237 / CIP 104748 / NCIMB 11846 / Nb-255).